We begin with the raw amino-acid sequence, 89 residues long: uncharacterized protein (89 aa).

This sequence to M.tuberculosis Rv3402c.

This is an uncharacterized protein from Mycobacterium tuberculosis (strain CDC 1551 / Oshkosh).